We begin with the raw amino-acid sequence, 196 residues long: 3-isopropylmalate dehydratase small subunit (196 aa).

It belongs to the LeuD family. LeuD type 1 subfamily. In terms of assembly, heterodimer of LeuC and LeuD.

It catalyses the reaction (2R,3S)-3-isopropylmalate = (2S)-2-isopropylmalate. It functions in the pathway amino-acid biosynthesis; L-leucine biosynthesis; L-leucine from 3-methyl-2-oxobutanoate: step 2/4. Catalyzes the isomerization between 2-isopropylmalate and 3-isopropylmalate, via the formation of 2-isopropylmaleate. The polypeptide is 3-isopropylmalate dehydratase small subunit (Herpetosiphon aurantiacus (strain ATCC 23779 / DSM 785 / 114-95)).